The chain runs to 471 residues: MATGKILQITGVVIDAEFPADSLPQIYNALEIPLGQGRPSLICEVQQQLGDSVVRAVAMSTTDGLVRGMDVINTGAPISVPVGPETLGRVFDVQGRPIDGEGPVGTTKTMPIHRPAPTFEEQSNRAELFETGIKVIDLIAPFTKGGKTGVFGGAGVGKTVIIQELISNIAKEQSGYSVFAGVGERSREGNDLIHEMKDSKIPGTDQTVFDKTVMVFGQMNEPPGARLRVALSALTMAEYFREEGRDVLLFVDNIFRFTQAGSEVSALLGRMPSQVGYQPTLGTEMGELQERITSTKTGSITSLQAVYVPADDYTDPAPATTFAHLDATISLERSISEKGIYPAVDPLASTSRILDPNIVGEEHYRVATEVQRMLQRYKDLQDIIAILGVEELSDDDKLTVSRARKLERFFSQPFGVAEVFTNIPGKYVAVGDTVKSFARVLAGEFDHIPESFFFMKGRIDDVVAAFDASKQ.

Position 152-159 (152-159 (GGAGVGKT)) interacts with ATP.

This sequence belongs to the ATPase alpha/beta chains family. F-type ATPases have 2 components, CF(1) - the catalytic core - and CF(0) - the membrane proton channel. CF(1) has five subunits: alpha(3), beta(3), gamma(1), delta(1), epsilon(1). CF(0) has three main subunits: a(1), b(2) and c(9-12). The alpha and beta chains form an alternating ring which encloses part of the gamma chain. CF(1) is attached to CF(0) by a central stalk formed by the gamma and epsilon chains, while a peripheral stalk is formed by the delta and b chains.

It localises to the cell membrane. It carries out the reaction ATP + H2O + 4 H(+)(in) = ADP + phosphate + 5 H(+)(out). Functionally, produces ATP from ADP in the presence of a proton gradient across the membrane. The catalytic sites are hosted primarily by the beta subunits. The polypeptide is ATP synthase subunit beta (Herpetosiphon aurantiacus (Herpetosiphon giganteus)).